A 175-amino-acid chain; its full sequence is Protein FAM89A (175 aa).

A disordered region spans residues 141 to 175 (FQEQGSLQDGQHHGSPRDQSPLTHLSSSDWILESI). Over residues 157–169 (RDQSPLTHLSSSD) the composition is skewed to polar residues.

It belongs to the FAM89 family.

The protein is Protein FAM89A (Fam89a) of Mus musculus (Mouse).